The sequence spans 380 residues: uncharacterized protein (380 aa).

The 4Fe-4S ferredoxin-type domain occupies 287–318; that stretch reads LRPKIYQDKCKNCRECLVEKYCPTFAIKRENG.

This is an uncharacterized protein from Methanocaldococcus jannaschii (strain ATCC 43067 / DSM 2661 / JAL-1 / JCM 10045 / NBRC 100440) (Methanococcus jannaschii).